The sequence spans 131 residues: L-aspartate semialdehyde sulfurtransferase iron-sulfur subunit (131 aa).

4Fe-4S ferredoxin-type domains lie at 73 to 102 (KVIK…MDED) and 103 to 131 (YNVV…EIFE). Residues C82, C85, C88, C92, C112, C115, C118, and C122 each coordinate [4Fe-4S] cluster.

May form a complex with MJ0100. Requires [4Fe-4S] cluster as cofactor.

It participates in amino-acid biosynthesis. Functionally, required for O-acetylhomoserine sulfhydrylase (OAHS)-independent homocysteine (Hcy) biosynthesis. Together with MJ0100, catalyzes the condensation of sulfide with aspartate semialdehyde to generate homocysteine. May be involved in the reduction of the disulfide formed in MJ0100. This chain is L-aspartate semialdehyde sulfurtransferase iron-sulfur subunit, found in Methanocaldococcus jannaschii (strain ATCC 43067 / DSM 2661 / JAL-1 / JCM 10045 / NBRC 100440) (Methanococcus jannaschii).